The following is a 912-amino-acid chain: Tiger protein E1 (912 aa).

The N-terminal stretch at 1–22 is a signal peptide; it reads MKLKHLTIFLFIFIYRFLFVKS. The Extracellular portion of the chain corresponds to 23–815; it reads DCYLINNERP…YSENKSSGFP (793 aa). Asn54, Asn108, Asn164, Asn183, Asn232, Asn268, Asn323, Asn356, Asn398, Asn407, Asn568, Asn637, Asn653, Asn658, Asn706, Asn716, Asn763, Asn774, Asn781, and Asn809 each carry an N-linked (GlcNAc...) asparagine glycan. 2 IPT/TIG domains span residues 532–609 and 612–686; these read SSDQ…GPFT and PVIE…PLII. The 82-residue stretch at 715–796 folds into the IPT/TIG 3 domain; the sequence is TNTSDIDQTA…DGQYFIAQIF (82 aa). Residues 816 to 836 traverse the membrane as a helical segment; it reads NEMYIGIVAIIIFLALIFFAI. At 837–912 the chain is on the cytoplasmic side; the sequence is KTQVEKYIEE…IRCCFKEHTD (76 aa).

The protein localises to the cell membrane. The protein is Tiger protein E1 (tgrE1) of Dictyostelium discoideum (Social amoeba).